Consider the following 204-residue polypeptide: Large ribosomal subunit protein bL25 (204 aa).

Ser123 is subject to Phosphoserine.

It belongs to the bacterial ribosomal protein bL25 family. CTC subfamily. Part of the 50S ribosomal subunit; part of the 5S rRNA/L5/L18/L25 subcomplex. Contacts the 5S rRNA. Binds to the 5S rRNA independently of L5 and L18.

This is one of the proteins that binds to the 5S RNA in the ribosome where it forms part of the central protuberance. The protein is Large ribosomal subunit protein bL25 of Pseudomonas aeruginosa (strain UCBPP-PA14).